The sequence spans 88 residues: Large ribosomal subunit protein bL27 (88 aa).

The interval M1–L21 is disordered.

Belongs to the bacterial ribosomal protein bL27 family.

This chain is Large ribosomal subunit protein bL27, found in Thermobifida fusca (strain YX).